A 192-amino-acid chain; its full sequence is Potassium-transporting ATPase KdpC subunit (192 aa).

A helical transmembrane segment spans residues proline 7–methionine 27.

It belongs to the KdpC family. The system is composed of three essential subunits: KdpA, KdpB and KdpC.

It localises to the cell inner membrane. In terms of biological role, part of the high-affinity ATP-driven potassium transport (or Kdp) system, which catalyzes the hydrolysis of ATP coupled with the electrogenic transport of potassium into the cytoplasm. This subunit acts as a catalytic chaperone that increases the ATP-binding affinity of the ATP-hydrolyzing subunit KdpB by the formation of a transient KdpB/KdpC/ATP ternary complex. The polypeptide is Potassium-transporting ATPase KdpC subunit (Paraburkholderia xenovorans (strain LB400)).